Consider the following 387-residue polypeptide: Natterin-4 (387 aa).

The N-terminal stretch at Met1 to Ala18 is a signal peptide. A propeptide spanning residues Glu19 to Gln46 is cleaved from the precursor. The segment covering Asn31–Leu40 has biased composition (basic and acidic residues). The interval Asn31–Gln57 is disordered.

Belongs to the natterin family. Post-translationally, contains 4 disulfide bonds. Expressed by the venom gland.

Its subcellular location is the secreted. Its activity is regulated as follows. Inhibited by tissue-kallikrein inhibitor TKI and trasylol. Plasma kallikrein inhibitor PKSI527 and classical inhibitors of serine-, metallo-, thiol- or aspartate-peptidases evokes a minor inhibition of the peptide digestion. Its function is as follows. Shows nociceptive, edema-inducing and kininogenase activity with release of kallidin from low molecular weight kininogen. The cleavage occurs at Met-Lys bonds. This chain is Natterin-4, found in Thalassophryne nattereri (Copper Joe toadfish).